Consider the following 163-residue polypeptide: Ribonuclease P protein subunit p25-like protein (163 aa).

Disordered stretches follow at residues 1 to 22 (MEHY…PQLP) and 129 to 163 (NEYG…DTRF). Residues 154-163 (PRRRARDTRF) are compositionally biased toward basic residues.

Belongs to the histone-like Alba family.

The protein localises to the nucleus. Its function is as follows. May be a component of ribonuclease P or MRP. The protein is Ribonuclease P protein subunit p25-like protein (RPP25L) of Bos taurus (Bovine).